Consider the following 421-residue polypeptide: 3-isopropylmalate dehydratase large subunit (421 aa).

Positions 300, 360, and 363 each coordinate [4Fe-4S] cluster.

This sequence belongs to the aconitase/IPM isomerase family. LeuC type 2 subfamily. In terms of assembly, heterodimer of LeuC and LeuD. [4Fe-4S] cluster is required as a cofactor.

It catalyses the reaction (2R,3S)-3-isopropylmalate = (2S)-2-isopropylmalate. It functions in the pathway amino-acid biosynthesis; L-leucine biosynthesis; L-leucine from 3-methyl-2-oxobutanoate: step 2/4. In terms of biological role, catalyzes the isomerization between 2-isopropylmalate and 3-isopropylmalate, via the formation of 2-isopropylmaleate. The polypeptide is 3-isopropylmalate dehydratase large subunit (Thermodesulfovibrio yellowstonii (strain ATCC 51303 / DSM 11347 / YP87)).